A 239-amino-acid chain; its full sequence is tRNA (guanine-N(7)-)-methyltransferase (239 aa).

The S-adenosyl-L-methionine site is built by glutamate 69, glutamate 94, aspartate 121, and aspartate 144. The active site involves aspartate 144. Lysine 148 provides a ligand contact to substrate. The interval 150 to 155 is interaction with RNA; it reads RHNKRR. Residues aspartate 180 and 217–220 contribute to the substrate site; that span reads TKFE.

The protein belongs to the class I-like SAM-binding methyltransferase superfamily. TrmB family. Monomer.

The catalysed reaction is guanosine(46) in tRNA + S-adenosyl-L-methionine = N(7)-methylguanosine(46) in tRNA + S-adenosyl-L-homocysteine. Its pathway is tRNA modification; N(7)-methylguanine-tRNA biosynthesis. Catalyzes the formation of N(7)-methylguanine at position 46 (m7G46) in tRNA. This chain is tRNA (guanine-N(7)-)-methyltransferase, found in Shigella boydii serotype 4 (strain Sb227).